The chain runs to 336 residues: Holliday junction branch migration complex subunit RuvB (336 aa).

A large ATPase domain (RuvB-L) region spans residues 4 to 184 (ADRLVSADSS…FGIVQRLEFY (181 aa)). ATP is bound by residues Ile23, Arg24, Gly65, Lys68, Thr69, Thr70, 131–133 (EDY), Arg174, Tyr184, and Arg221. Thr69 lines the Mg(2+) pocket. The segment at 185 to 255 (QIPDLQHIVS…IAAQALDMLN (71 aa)) is small ATPAse domain (RuvB-S). Residues 258-336 (AEGFDYMDRK…HFGITPPEMP (79 aa)) form a head domain (RuvB-H) region. Positions 294, 313, and 318 each coordinate DNA.

This sequence belongs to the RuvB family. In terms of assembly, homohexamer. Forms an RuvA(8)-RuvB(12)-Holliday junction (HJ) complex. HJ DNA is sandwiched between 2 RuvA tetramers; dsDNA enters through RuvA and exits via RuvB. An RuvB hexamer assembles on each DNA strand where it exits the tetramer. Each RuvB hexamer is contacted by two RuvA subunits (via domain III) on 2 adjacent RuvB subunits; this complex drives branch migration. In the full resolvosome a probable DNA-RuvA(4)-RuvB(12)-RuvC(2) complex forms which resolves the HJ.

The protein localises to the cytoplasm. It carries out the reaction ATP + H2O = ADP + phosphate + H(+). Functionally, the RuvA-RuvB-RuvC complex processes Holliday junction (HJ) DNA during genetic recombination and DNA repair, while the RuvA-RuvB complex plays an important role in the rescue of blocked DNA replication forks via replication fork reversal (RFR). RuvA specifically binds to HJ cruciform DNA, conferring on it an open structure. The RuvB hexamer acts as an ATP-dependent pump, pulling dsDNA into and through the RuvAB complex. RuvB forms 2 homohexamers on either side of HJ DNA bound by 1 or 2 RuvA tetramers; 4 subunits per hexamer contact DNA at a time. Coordinated motions by a converter formed by DNA-disengaged RuvB subunits stimulates ATP hydrolysis and nucleotide exchange. Immobilization of the converter enables RuvB to convert the ATP-contained energy into a lever motion, pulling 2 nucleotides of DNA out of the RuvA tetramer per ATP hydrolyzed, thus driving DNA branch migration. The RuvB motors rotate together with the DNA substrate, which together with the progressing nucleotide cycle form the mechanistic basis for DNA recombination by continuous HJ branch migration. Branch migration allows RuvC to scan DNA until it finds its consensus sequence, where it cleaves and resolves cruciform DNA. This chain is Holliday junction branch migration complex subunit RuvB, found in Klebsiella pneumoniae (strain 342).